A 230-amino-acid chain; its full sequence is Leucyl/phenylalanyl-tRNA--protein transferase (230 aa).

This sequence belongs to the L/F-transferase family.

It localises to the cytoplasm. It carries out the reaction N-terminal L-lysyl-[protein] + L-leucyl-tRNA(Leu) = N-terminal L-leucyl-L-lysyl-[protein] + tRNA(Leu) + H(+). The enzyme catalyses N-terminal L-arginyl-[protein] + L-leucyl-tRNA(Leu) = N-terminal L-leucyl-L-arginyl-[protein] + tRNA(Leu) + H(+). It catalyses the reaction L-phenylalanyl-tRNA(Phe) + an N-terminal L-alpha-aminoacyl-[protein] = an N-terminal L-phenylalanyl-L-alpha-aminoacyl-[protein] + tRNA(Phe). Functionally, functions in the N-end rule pathway of protein degradation where it conjugates Leu, Phe and, less efficiently, Met from aminoacyl-tRNAs to the N-termini of proteins containing an N-terminal arginine or lysine. The protein is Leucyl/phenylalanyl-tRNA--protein transferase of Syntrophotalea carbinolica (strain DSM 2380 / NBRC 103641 / GraBd1) (Pelobacter carbinolicus).